The following is a 215-amino-acid chain: Large ribosomal subunit protein bL25 (215 aa).

The segment covering 192-203 has biased composition (acidic residues); sequence EEATEEEEEAAE. Positions 192–215 are disordered; the sequence is EEATEEEEEAAEPEVIKRKEEEEE. Residues 205 to 215 show a composition bias toward basic and acidic residues; sequence EVIKRKEEEEE.

Belongs to the bacterial ribosomal protein bL25 family. CTC subfamily. As to quaternary structure, part of the 50S ribosomal subunit; part of the 5S rRNA/L5/L18/L25 subcomplex. Contacts the 5S rRNA. Binds to the 5S rRNA independently of L5 and L18.

Its function is as follows. This is one of the proteins that binds to the 5S RNA in the ribosome where it forms part of the central protuberance. The chain is Large ribosomal subunit protein bL25 from Thermotoga maritima (strain ATCC 43589 / DSM 3109 / JCM 10099 / NBRC 100826 / MSB8).